The primary structure comprises 137 residues: Small ribosomal subunit protein uS12 (137 aa).

The interval 1 to 57 (MPTINQLVRKPRKSKVKKSKSPALNVGYNSRKKVQTNVSSPQKRGVATRVGTMTPKK) is disordered. Residues 9–20 (RKPRKSKVKKSK) are compositionally biased toward basic residues. D102 is modified (3-methylthioaspartic acid).

The protein belongs to the universal ribosomal protein uS12 family. In terms of assembly, part of the 30S ribosomal subunit. Contacts proteins S8 and S17. May interact with IF1 in the 30S initiation complex.

Its function is as follows. With S4 and S5 plays an important role in translational accuracy. Functionally, interacts with and stabilizes bases of the 16S rRNA that are involved in tRNA selection in the A site and with the mRNA backbone. Located at the interface of the 30S and 50S subunits, it traverses the body of the 30S subunit contacting proteins on the other side and probably holding the rRNA structure together. The combined cluster of proteins S8, S12 and S17 appears to hold together the shoulder and platform of the 30S subunit. In Streptococcus suis (strain 05ZYH33), this protein is Small ribosomal subunit protein uS12.